Reading from the N-terminus, the 82-residue chain is Small ribosomal subunit protein bS16 (82 aa).

The protein belongs to the bacterial ribosomal protein bS16 family.

The chain is Small ribosomal subunit protein bS16 from Psychromonas ingrahamii (strain DSM 17664 / CCUG 51855 / 37).